Reading from the N-terminus, the 398-residue chain is Nuclear egress protein 2 (398 aa).

The Perinuclear space segment spans residues 1–359; it reads MEMNKVLHQD…GPSRPQSGPW (359 aa). Disordered stretches follow at residues 202–246 and 306–334; these read ALTR…PPPP and LEEH…SLER. Positions 215–224 are enriched in pro residues; sequence ASPPPPPPRH. The residue at position 216 (Ser216) is a Phosphoserine. Low complexity predominate over residues 225–240; sequence PSCSPTMVAAGGAAAG. Positions 311-323 are enriched in basic residues; that stretch reads SRRRGVSTHHRHP. Residues 360-382 traverse the membrane as a helical segment; sequence LPARFATLGPLVLALLLVLALLW. Residues 383–398 are Nuclear-facing; it reads RGHGQSSSPTRSAHRD.

Belongs to the herpesviridae NEC2 protein family. In terms of assembly, forms a heterohexameric complex with NEC1. Interacts with host UBA7 and RNF170; this interaction promotes UBA7 proteasomal degradation. Phosphorylated. Phosphorylation by viral kinase UL97 at Ser-216 plays an important role for correct viral nuclear egress complex (NEC) localization.

It localises to the host nucleus inner membrane. Its function is as follows. Plays an essential role in virion nuclear egress, the first step of virion release from infected cell. Within the host nucleus, NEC1 interacts with the newly formed capsid through the vertexes and directs it to the inner nuclear membrane by associating with NEC2. Induces the budding of the capsid at the inner nuclear membrane as well as its envelopment into the perinuclear space. There, the NEC1/NEC2 complex promotes the fusion of the enveloped capsid with the outer nuclear membrane and the subsequent release of the viral capsid into the cytoplasm where it will reach the secondary budding sites in the host Golgi or trans-Golgi network. Inhibits host ISGylation and subsequent innate antiviral response by targeting host UBA7 for proteasomal degradation. In Homo sapiens (Human), this protein is Nuclear egress protein 2.